Here is a 98-residue protein sequence, read N- to C-terminus: Small ribosomal subunit protein uS17 (98 aa).

This sequence belongs to the universal ribosomal protein uS17 family. In terms of assembly, part of the 30S ribosomal subunit.

One of the primary rRNA binding proteins, it binds specifically to the 5'-end of 16S ribosomal RNA. This Leptothrix cholodnii (strain ATCC 51168 / LMG 8142 / SP-6) (Leptothrix discophora (strain SP-6)) protein is Small ribosomal subunit protein uS17.